The sequence spans 438 residues: Ribosome biogenesis protein NOP53 (438 aa).

Disordered regions lie at residues methionine 1–glycine 23 and histidine 247–glutamate 346. A compositionally biased stretch (basic residues) spans glycine 12–arginine 21. Basic and acidic residues-rich tracts occupy residues lysine 265–glutamate 288, glutamine 297–asparagine 318, and leucine 325–glutamate 346.

Belongs to the NOP53 family.

Its subcellular location is the nucleus. It localises to the nucleolus. It is found in the nucleoplasm. In terms of biological role, may play a role in ribosome biogenesis, being required for integration of the 5S RNP into the ribosomal large subunit. The chain is Ribosome biogenesis protein NOP53 from Caenorhabditis elegans.